Reading from the N-terminus, the 78-residue chain is MPTKAGTKSTANKKTTKGSSKSGSARGHTGKTHAPPSMHSGMLYKDMVNIARSKGIPIYQNGTRLTKSELEKKIKRSK.

A compositionally biased stretch (low complexity) spans 1-25 (MPTKAGTKSTANKKTTKGSSKSGSA). The tract at residues 1-41 (MPTKAGTKSTANKKTTKGSSKSGSARGHTGKTHAPPSMHSG) is disordered.

This sequence belongs to the asfivirus P10 family.

Its subcellular location is the virion. May play a role in genome packaging through direct interaction with viral DNA. Binds to ssDNA and dsDNA with the same apparent affinity in vitro. This chain is Structural DNA-binding protein p10, found in African swine fever virus (isolate Warthog/Namibia/Wart80/1980) (ASFV).